The primary structure comprises 227 residues: PKHD-type hydroxylase ACICU_00484 (227 aa).

The region spanning D78–S178 is the Fe2OG dioxygenase domain. Residues H96, D98, and H159 each coordinate Fe cation. R169 is a 2-oxoglutarate binding site.

Requires Fe(2+) as cofactor. L-ascorbate serves as cofactor.

The chain is PKHD-type hydroxylase ACICU_00484 from Acinetobacter baumannii (strain ACICU).